Here is a 315-residue protein sequence, read N- to C-terminus: MASFASLVKKELTQLEVHPEHAKAELSALIRMNGSLTLMAHRFVLNIQTENPAIARRIYSLIRQVYHHEANLVVHRKMKLKKNYQYIVRLTEGVNDILSDLSILDPDTMAISTTVPASVLKEPQRMRSYLRGAFLASGSVNNPETSRYHLEIYSLYDNHNAGILKMMNHFNLNARTVERRSGYIVYLKEAEKIADFLQVIGATNAMLKFEDVRIMRDMRNSVNRLVNCENANMNKTIDAAQKQIENINYLKNHVGLDNLPAKLREIAVLRLAHPDVSLQELGAMMPSGQISKSGVNHRLRKLNQIAEGYQQPEDA.

The H-T-H motif DNA-binding region spans 277 to 311 (SLQELGAMMPSGQISKSGVNHRLRKLNQIAEGYQQ).

It belongs to the WhiA family.

Its function is as follows. Involved in cell division and chromosome segregation. This chain is Probable cell division protein WhiA, found in Lacticaseibacillus paracasei (strain ATCC 334 / BCRC 17002 / CCUG 31169 / CIP 107868 / KCTC 3260 / NRRL B-441) (Lactobacillus paracasei).